The sequence spans 209 residues: Potassium-transporting ATPase KdpC subunit (209 aa).

Residues 10-30 (VISLVFLFVLGFLFPTVTSLI) form a helical membrane-spanning segment.

The protein belongs to the KdpC family. The system is composed of three essential subunits: KdpA, KdpB and KdpC.

Its subcellular location is the cell membrane. Functionally, part of the high-affinity ATP-driven potassium transport (or Kdp) system, which catalyzes the hydrolysis of ATP coupled with the electrogenic transport of potassium into the cytoplasm. This subunit acts as a catalytic chaperone that increases the ATP-binding affinity of the ATP-hydrolyzing subunit KdpB by the formation of a transient KdpB/KdpC/ATP ternary complex. This chain is Potassium-transporting ATPase KdpC subunit, found in Thermoplasma volcanium (strain ATCC 51530 / DSM 4299 / JCM 9571 / NBRC 15438 / GSS1).